A 504-amino-acid polypeptide reads, in one-letter code: Fumitremorgin C monooxygenase (504 aa).

The helical transmembrane segment at 12–32 (LGVVGASLIVILGIILLFPLG) threads the bilayer. C442 provides a ligand contact to heme.

It belongs to the cytochrome P450 family. Requires heme as cofactor.

It localises to the membrane. It carries out the reaction fumitremorgin C + 2 reduced [NADPH--hemoprotein reductase] + 2 O2 = 12alpha,13alpha-dihydroxyfumitremorgin C + 2 oxidized [NADPH--hemoprotein reductase] + 2 H2O + 2 H(+). It functions in the pathway mycotoxin biosynthesis. Functionally, cytochrome P450 monooxygenase; part of the gene cluster that mediates the biosynthesis of fumitremorgins, indole alkaloids that carry not only intriguing chemical structures, but also interesting biological and pharmacological activities. The biosynthesis of fumitremorgin-type alkaloids begins by condensation of the two amino acids L-tryptophan and L-proline to brevianamide F, catalyzed by the non-ribosomal peptide synthetase ftmA. Brevianamide F is then prenylated by the prenyltransferase ftmPT1/ftmB in the presence of dimethylallyl diphosphate, resulting in the formation of tryprostatin B. The three cytochrome P450 monooxygenases, ftmP450-1/ftmC, ftmP450-2/ftmE and ftmP450-3/FtmG, are responsible for the conversion of tryprostatin B to 6-hydroxytryprostatin B, tryprostatin A to fumitremorgin C and fumitremorgin C to 12,13-dihydroxyfumitremorgin C, respectively. The putative methyltransferase ftmMT/ftmD is expected for the conversion of 6-hydroxytryprostatin B to tryprostatin A. FtmPT2/FtmH catalyzes the prenylation of 12,13-dihydroxyfumitre-morgin C in the presence of dimethylallyl diphosphate, resulting in the formation of fumitremorgin B. Fumitremorgin B is further converted to verruculogen by ftmOx1/ftmF via the insertion of an endoperoxide bond between the two prenyl moieties. In some fungal species, verruculogen is further converted to fumitremorgin A, but the enzymes involved in this step have not been identified yet. The chain is Fumitremorgin C monooxygenase from Aspergillus fumigatus (Neosartorya fumigata).